Consider the following 351-residue polypeptide: Histidine protein kinase SaeS (351 aa).

2 helical membrane-spanning segments follow: residues 9-29 (IIIG…IAYI) and 40-60 (TLTL…SIFI). An HAMP domain is found at 61–114 (NPLIQKIKQFNIKTKQFANGNYASNDKTFNSPKEIYELNQSFNKMASEITQQMN). In terms of domain architecture, Histidine kinase spans 129-348 (NLAHDLKTPL…TMTVTLHKLD (220 aa)). His-132 is modified (phosphohistidine; by autocatalysis).

In terms of processing, autophosphorylated.

The protein localises to the cell membrane. The enzyme catalyses ATP + protein L-histidine = ADP + protein N-phospho-L-histidine.. Functionally, member of the two-component regulatory system SaeR/SaeS involved in the regulation of staphylococcal virulence factors in a strain-dependent fashion. Probably functions as a membrane-associated protein kinase that upon sensing the appropriate signal, autophosphorylates and in turn activates the cytosolic response regulator SaeR. The polypeptide is Histidine protein kinase SaeS (saeS) (Staphylococcus aureus (strain USA300)).